The primary structure comprises 183 residues: Potassium-transporting ATPase KdpC subunit (183 aa).

The chain crosses the membrane as a helical span at residues 10 to 30 (ASLLVLSLVTGVAYPLLVTGI).

The protein belongs to the KdpC family. As to quaternary structure, the system is composed of three essential subunits: KdpA, KdpB and KdpC.

Its subcellular location is the cell inner membrane. Part of the high-affinity ATP-driven potassium transport (or Kdp) system, which catalyzes the hydrolysis of ATP coupled with the electrogenic transport of potassium into the cytoplasm. This subunit acts as a catalytic chaperone that increases the ATP-binding affinity of the ATP-hydrolyzing subunit KdpB by the formation of a transient KdpB/KdpC/ATP ternary complex. The sequence is that of Potassium-transporting ATPase KdpC subunit from Pseudomonas aeruginosa (strain ATCC 15692 / DSM 22644 / CIP 104116 / JCM 14847 / LMG 12228 / 1C / PRS 101 / PAO1).